Reading from the N-terminus, the 1187-residue chain is Disease resistance protein TAO1 (1187 aa).

Residues 38–202 (WLHPVFLSFR…KISKDVSDVL (165 aa)) form the TIR domain. Glutamate 113 is an active-site residue. In terms of domain architecture, NB-ARC spans 217–478 (EAHTTEITSL…FFRRERIETL (262 aa)). LRR repeat units lie at residues 498 to 522 (DKSLLSLNLGNIEMHNLLVQLGLDI), 611 to 633 (SRKLRLLHWERYPLTCLPPKFNP), 635 to 658 (FLVKINMRDSMLEKLWDGNEPIRN), 660 to 679 (KWMDLSFCVNLKELPDFSTA), 680 to 703 (TNLQELRLINCLSLVELPSSIGNA), 704 to 727 (TNLLELDLIDCSSLVKLPSSIGNL), 728 to 750 (TNLKKLFLNRCSSLVKLPSSFGN), 752 to 775 (TSLKELNLSGCSSLLEIPSSIGNI), 799 to 823 (NTNLKELHLLNCSSLMECPSSMLNL), 824 to 849 (TRLEDLNLSGCLSLVKLPSIGNVINL), 870 to 894 (ATNLDTLYLDGCSNLLELPSSIWNI), 895 to 918 (TNLQSLYLNGCSSLKELPSLVENA), 920 to 942 (NLQSLSLMKCSSLVELPSSIWRI), and 953 to 974 (CSSLLELNLVSHPVVPDSLILD).

It catalyses the reaction NAD(+) + H2O = ADP-D-ribose + nicotinamide + H(+). Its function is as follows. TIR-NB-LRR receptor-like protein that contributes to disease resistance induced by the Pseudomonas syringae type III effector AvrB. Acts additively with RPM1 to generate a full disease resistance response to P.syringae expressing this type III effector. This chain is Disease resistance protein TAO1, found in Arabidopsis thaliana (Mouse-ear cress).